The chain runs to 345 residues: D-fructose 1,6-bisphosphatase class 2/sedoheptulose 1,7-bisphosphatase (345 aa).

Mn(2+) contacts are provided by aspartate 33, glutamate 57, aspartate 97, and glutamate 100. Residues 100-102 (EGT), tyrosine 131, 176-178 (RPR), and 198-200 (DGD) each bind substrate. Glutamate 225 provides a ligand contact to Mn(2+).

This sequence belongs to the FBPase class 2 family. In terms of assembly, homotetramer. Mn(2+) serves as cofactor.

The enzyme catalyses beta-D-fructose 1,6-bisphosphate + H2O = beta-D-fructose 6-phosphate + phosphate. It carries out the reaction D-sedoheptulose 1,7-bisphosphate + H2O = D-sedoheptulose 7-phosphate + phosphate. Its pathway is carbohydrate biosynthesis; Calvin cycle. In terms of biological role, catalyzes the hydrolysis of fructose 1,6-bisphosphate (Fru 1,6-P2) and sedoheptulose 1,7-bisphosphate (Sed 1,7-P2) to fructose 6-phosphate and sedoheptulose 7-phosphate, respectively. The sequence is that of D-fructose 1,6-bisphosphatase class 2/sedoheptulose 1,7-bisphosphatase from Synechocystis sp. (strain ATCC 27184 / PCC 6803 / Kazusa).